Consider the following 634-residue polypeptide: Transcription termination factor FttA (634 aa).

Residues 4-69 (EEVLENIRKE…ISIRPDPSVL (66 aa)) are KHa. The tract at residues 70–137 (VEPEIAKQKI…WAPKPVRTPP (68 aa)) is KHb. Positions 179–381 (WIRVSFLGGA…LIIESTYGAY (203 aa)) are metallo-beta-lactamase N-terminus. Zn(2+) contacts are provided by His240, His242, Asp244, His245, His327, and Asp350. The tract at residues 382–575 (DDVLPEREEA…LQVYTIEGFS (194 aa)) is beta-Casp. The segment at 576-634 (GHSDRKQLIKYIRRLKPSPEKIIMVHGEESKCLDFADTVRRLFKKQTYVPMNLDAIRVK) is metallo-beta-lactamase C-terminus. Residue His601 participates in Zn(2+) binding.

The protein belongs to the metallo-beta-lactamase superfamily. RNA-metabolizing metallo-beta-lactamase-like family. FttA subfamily. Homodimer. Interacts with RNA polymerase (RNAP), interacts with the Spt4-Spt5 complex. Requires Zn(2+) as cofactor.

Its activity is regulated as follows. Optimal NaCl concentration is 100 mM for nuclease activity on RNA. In terms of biological role, terminates transcription on the whole genome. Termination is linked to FttA-mediated RNA cleavage and does not require NTP hydrolysis. Cleaves endonucleolytically at the RNA exit channel of RNA polymerase (RNAP); the 5'-3' exonuclease activity of this protein degrades the nascent RNA released from RNAP. Its function is as follows. An endoribonuclease with no apparent exonuclease activity, has low activity on single-stranded DNA (endodeoxyribonuclease, endoDNase). This chain is Transcription termination factor FttA, found in Methanocaldococcus jannaschii (strain ATCC 43067 / DSM 2661 / JAL-1 / JCM 10045 / NBRC 100440) (Methanococcus jannaschii).